Here is a 373-residue protein sequence, read N- to C-terminus: Nuclear hormone receptor family member nhr-69 (373 aa).

A DNA-binding region (nuclear receptor) is located at residues 3–78 (EEICHICNDK…AGMKSNAIQN (76 aa)). 2 consecutive NR C4-type zinc fingers follow at residues 6–26 (CHICNDKSTGKHYGAISCDGC) and 42–66 (CRFEQNCDVTKNKRNACRACRLQKC). In terms of domain architecture, NR LBD spans 93 to 344 (EKEDLIDQLV…SLMEELILND (252 aa)).

The protein belongs to the nuclear hormone receptor family. In terms of assembly, interacts with R-SMAD daf-8. Expressed in the ASI neurons, hypodermis, and in tail neurons.

The protein resides in the nucleus. Functionally, orphan nuclear receptor which, in cooperation with R-SMAD daf-8, modulates the Insulin/IGF-1-like signaling (IIS) pathway, perhaps by regulating expression of the potassium channel exp-2, which in turn modulates the secretion of insulin-like peptide daf-28. This is Nuclear hormone receptor family member nhr-69 (nhr-69) from Caenorhabditis elegans.